The sequence spans 790 residues: Probable E3 ubiquitin-protein ligase MARCHF10 (790 aa).

The disordered stretch occupies residues 33 to 240 (LKRQEHKKEP…PQNEPHTALS (208 aa)). The span at 34–48 (KRQEHKKEPNEKKQE) shows a compositional bias: basic and acidic residues. A compositionally biased stretch (low complexity) spans 61–70 (FSSGSSCKQS). Serine 78 bears the Phosphoserine mark. The span at 218 to 227 (PLERQKKGDP) shows a compositional bias: basic and acidic residues. Residues 230–240 (RPQNEPHTALS) are compositionally biased toward polar residues. Positions 284–308 (LSLNNEQENYDTEEETRTEEELLLA) form a coiled coil. Disordered stretches follow at residues 323–416 (GTSA…EDVS) and 507–569 (LSPI…RHLQ). Polar residues-rich tracts occupy residues 355-370 (RKTS…SSPG), 406-416 (GVTQVSAEDVS), and 511-520 (RNRNPSAASE). Basic and acidic residues predominate over residues 521–533 (SHSEDTQGEEERA). Positions 534-563 (STSQAQESPLLSDLPNPQSSMALGDSPSSP) are enriched in polar residues. The segment at 633–703 (DSEEEGDLCR…EMCKQGLLVD (71 aa)) adopts an RING-CH-type zinc-finger fold. Cysteine 641, cysteine 644, cysteine 659, cysteine 661, histidine 669, cysteine 672, cysteine 693, and cysteine 696 together coordinate Zn(2+). The interval 757-790 (ERMSRNYPQPRPEESESSESGDGNESNVYPGRVI) is disordered. Residues 774–783 (SESGDGNESN) show a composition bias toward low complexity.

It carries out the reaction S-ubiquitinyl-[E2 ubiquitin-conjugating enzyme]-L-cysteine + [acceptor protein]-L-lysine = [E2 ubiquitin-conjugating enzyme]-L-cysteine + N(6)-ubiquitinyl-[acceptor protein]-L-lysine.. The protein operates within protein modification; protein ubiquitination. Its function is as follows. E3 ubiquitin-protein ligase. E3 ubiquitin ligases accept ubiquitin from an E2 ubiquitin-conjugating enzyme in the form of a thioester and then directly transfer the ubiquitin to targeted substrates. In Rattus norvegicus (Rat), this protein is Probable E3 ubiquitin-protein ligase MARCHF10 (Marchf10).